A 259-amino-acid polypeptide reads, in one-letter code: UPF0246 protein VF_2109 (259 aa).

It belongs to the UPF0246 family.

This Aliivibrio fischeri (strain ATCC 700601 / ES114) (Vibrio fischeri) protein is UPF0246 protein VF_2109.